Consider the following 443-residue polypeptide: Protoheme IX farnesyltransferase, mitochondrial (443 aa).

The interval 68–113 is disordered; the sequence is LSQRVKPKPEPPASPFLEHTSSGQARADEDELPSFPAPSRPLSRKP. The next 7 membrane-spanning stretches (helical) occupy residues 174–194, 230–250, 252–272, 286–306, 308–328, 363–383, and 410–430; these read AGFA…TSLG, ISPL…VALL, WGVN…YTCC, VGAV…TGSL, AGAL…FNAL, LIAL…FPVI, and LFFC…TCKQ.

Belongs to the UbiA prenyltransferase family.

It localises to the mitochondrion membrane. The catalysed reaction is heme b + (2E,6E)-farnesyl diphosphate + H2O = Fe(II)-heme o + diphosphate. Functionally, converts protoheme IX and farnesyl diphosphate to heme O. This Mus musculus (Mouse) protein is Protoheme IX farnesyltransferase, mitochondrial (Cox10).